Reading from the N-terminus, the 432-residue chain is Keratin, type I cytoskeletal 17 (432 aa).

The interval 1–24 (MTTTIRQFTSSSSIKGSSGLGGGS) is disordered. Residues 1–83 (MTTTIRQFTS…GGVDGLLAGG (83 aa)) form a head region. Ser-12 and Ser-13 each carry phosphoserine. A Glycyl lysine isopeptide (Lys-Gly) (interchain with G-Cter in SUMO1); alternate cross-link involves residue Lys-15. Lys-15 participates in a covalent cross-link: Glycyl lysine isopeptide (Lys-Gly) (interchain with G-Cter in SUMO2); alternate. Phosphoserine occurs at positions 25, 32, and 39. The residue at position 44 (Ser-44) is a Phosphoserine; by RPS6KA1. Residues 84 to 120 (EKATMQNLNDRLASYLDKVRALEEANTELEVKIRDWY) are coil 1A. The 312-residue stretch at 84 to 395 (EKATMQNLND…RLLEGEDAHL (312 aa)) folds into the IF rod domain. Thr-110 carries the post-translational modification Phosphothreonine. The tract at residues 121–138 (QRQAPGPARDYSQYYRTI) is linker 1. Residues 139–230 (EELQNKILTA…NHEEEMNALR (92 aa)) form a coil 1B region. A linker 12 region spans residues 231–250 (GQVGGEINVEMDAAPGVDLS). The coil 2 stretch occupies residues 251–392 (RILNEMRDQY…TYRRLLEGED (142 aa)). Lys-278 participates in a covalent cross-link: Glycyl lysine isopeptide (Lys-Gly) (interchain with G-Cter in SUMO2). A Phosphothreonine modification is found at Thr-279. Phosphoserine is present on Ser-323. The segment at 393–432 (AHLTQYKKEPVTTRQVRTIVEEVQDGKVISSREQVHQTTR) is tail. Residues Lys-399, Lys-400, and Lys-419 each participate in a glycyl lysine isopeptide (Lys-Gly) (interchain with G-Cter in SUMO1); alternate cross-link. Glycyl lysine isopeptide (Lys-Gly) (interchain with G-Cter in SUMO2); alternate cross-links involve residues Lys-399, Lys-400, and Lys-419.

It belongs to the intermediate filament family. As to quaternary structure, heterodimer of a type I and a type II keratin. KRT17 associates with KRT6 isomers (KRT6A or KRT6B). Interacts with TRADD and SFN. In terms of processing, phosphorylation at Ser-44 occurs in a growth- and stress-dependent fashion in skin keratinocytes, it has no effect on filament organization.

Its subcellular location is the cytoplasm. Type I keratin involved in the formation and maintenance of various skin appendages, specifically in determining shape and orientation of hair. Required for the correct growth of hair follicles, in particular for the persistence of the anagen (growth) state. Modulates the function of TNF-alpha in the specific context of hair cycling. Regulates protein synthesis and epithelial cell growth through binding to the adapter protein SFN and by stimulating Akt/mTOR pathway. Involved in tissue repair. May be a marker of basal cell differentiation in complex epithelia and therefore indicative of a certain type of epithelial 'stem cells'. Acts as a promoter of epithelial proliferation by acting a regulator of immune response in skin: promotes Th1/Th17-dominated immune environment contributing to the development of basaloid skin tumors. May act as an autoantigen in the immunopathogenesis of psoriasis, with certain peptide regions being a major target for autoreactive T-cells and hence causing their proliferation. This chain is Keratin, type I cytoskeletal 17, found in Pan troglodytes (Chimpanzee).